A 308-amino-acid polypeptide reads, in one-letter code: Nodulation protein D 1 (308 aa).

The 58-residue stretch at 6 to 63 (LDLNLLVALDALMTERNLTAAARSINLSQPAMSAAVGRLRVYFEDELFTMNGRELVLT) folds into the HTH lysR-type domain. Positions 23-42 (LTAAARSINLSQPAMSAAVG) form a DNA-binding region, H-T-H motif.

This sequence belongs to the LysR transcriptional regulatory family.

In terms of biological role, nodD regulates the expression of the nodABCFE genes which encode other nodulation proteins. NodD is also a negative regulator of its own expression. Binds flavonoids as inducers. This is Nodulation protein D 1 (nodD1) from Rhizobium tropici.